Reading from the N-terminus, the 489-residue chain is MPRVYIGRLSYQARERDVERFFKGYGKILEVDLKNGYGFVEFDDLRDADDAVYELNGKDLCGERVIVEHARGPRRDGSYGSGRSGYGYRRSGRDKYGPPTRTEYRLIVENLSSRCSWQDLKDYMRQAGEVTYADAHKGRKNEGVIEFVSYSDMKRALEKLDGTEVNGRKIRLVEDKPGSRRRRSYSRSRSHSRSRSRSRHSRKSRSRSGSSKSSHSKSRSRSRSGSHSRSKSRSRSQSRSRSKKEKSRSPSKDNKSRSRSRSPDKSRSKSKDHAEDKLQNNDSAGKAKSHSPSRHDSKSRSRSQERRAEEERRRSVSRARSQEKSRSQEKSLLKSRSRSRSRSRSRSKDKRKGRKRSRDESRSRSRSKSERSRKHSSKRDSKVSSSSSSSKKKKDTDHSRSPSRSVSKEREHAKAESGQRGSRAEGESEAPNPEPRARSRSTSKSKPNVPAESRSRSKSASKTRSRSKSPSRSASRSPSRSRSRSHSRS.

One can recognise an RRM 1 domain in the interval 2–72 (PRVYIGRLSY…ERVIVEHARG (71 aa)). Disordered regions lie at residues 72-95 (GPRR…GRDK) and 169-489 (KIRL…HSRS). Ser78 and Ser84 each carry phosphoserine. Residues 104–177 (YRLIVENLSS…RKIRLVEDKP (74 aa)) form the RRM 2 domain. Composition is skewed to basic residues over residues 179 to 206 (SRRR…KSRS) and 214 to 246 (SHSK…KKEK). Residues 247–279 (SRSPSKDNKSRSRSRSPDKSRSKSKDHAEDKLQ) are compositionally biased toward basic and acidic residues. Residues Ser289, Ser291, and Ser293 each carry the phosphoserine modification. Positions 293 to 332 (SRHDSKSRSRSQERRAEEERRRSVSRARSQEKSRSQEKSL) are enriched in basic and acidic residues. Residues 333–356 (LKSRSRSRSRSRSRSKDKRKGRKR) are compositionally biased toward basic residues. 2 stretches are compositionally biased toward basic and acidic residues: residues 357-370 (SRDE…SKSE) and 394-426 (KDTD…RAEG). Phosphoserine occurs at positions 441, 453, and 455. Composition is skewed to basic residues over residues 456–469 (RSKS…RSKS) and 479–489 (SRSRSRSHSRS).

Belongs to the splicing factor SR family. As to quaternary structure, found in a pre-mRNA splicing complex with SRSF4/SFRS4, SRSF5/SFRS5, SNRNP70, SNRPA1, SRRM1 and SRRM2. Interacts with PNN. Extensively phosphorylated on serine residues in the RS domain.

It is found in the nucleus speckle. Its function is as follows. Plays a role in alternative splice site selection during pre-mRNA splicing. Represses the splicing of MAPT/Tau exon 10. The protein is Serine/arginine-rich splicing factor 4 (Srsf4) of Mus musculus (Mouse).